Consider the following 216-residue polypeptide: MOB kinase activator 1A (216 aa).

Serine 2 is subject to N-acetylserine. Phosphothreonine is present on residues threonine 12 and threonine 35. A Phosphothreonine; by STK3/MST2 modification is found at threonine 74. The Zn(2+) site is built by cysteine 79, cysteine 84, histidine 161, and histidine 166. Threonine 181 is modified (phosphothreonine).

This sequence belongs to the MOB1/phocein family. Binds STK38 and STK38L. Interacts with LATS1 and LATS2. Forms a tripartite complex with STK38 and STK3/MST2. In terms of processing, phosphorylated by STK3/MST2 and STK4/MST1 and this phosphorylation enhances its binding to LATS1. As to expression, adrenal gland, bone marrow, brain, placenta, prostate, salivary gland, skeletal muscle, testis, thymus, thyroid gland, heart, spinal cord, fetal brain and fetal liver.

Activator of LATS1/2 in the Hippo signaling pathway which plays a pivotal role in organ size control and tumor suppression by restricting proliferation and promoting apoptosis. The core of this pathway is composed of a kinase cascade wherein STK3/MST2 and STK4/MST1, in complex with its regulatory protein SAV1, phosphorylates and activates LATS1/2 in complex with its regulatory protein MOB1, which in turn phosphorylates and inactivates YAP1 oncoprotein and WWTR1/TAZ. Phosphorylation of YAP1 by LATS1/2 inhibits its translocation into the nucleus to regulate cellular genes important for cell proliferation, cell death, and cell migration. Stimulates the kinase activity of STK38 and STK38L. Acts cooperatively with STK3/MST2 to activate STK38. In Homo sapiens (Human), this protein is MOB kinase activator 1A.